Consider the following 150-residue polypeptide: Endoribonuclease YbeY (150 aa).

The Zn(2+) site is built by His102, His106, and His112.

Belongs to the endoribonuclease YbeY family. Zn(2+) is required as a cofactor.

The protein localises to the cytoplasm. Functionally, single strand-specific metallo-endoribonuclease involved in late-stage 70S ribosome quality control and in maturation of the 3' terminus of the 16S rRNA. This is Endoribonuclease YbeY from Thermotoga petrophila (strain ATCC BAA-488 / DSM 13995 / JCM 10881 / RKU-1).